Here is a 1220-residue protein sequence, read N- to C-terminus: Plasma membrane calcium-transporting ATPase 1 (1220 aa).

The residue at position 2 (glycine 2) is an N-acetylglycine. At 2 to 105 the chain is on the cytoplasmic side; it reads GDMANNSVAY…KTFLQLVWEA (104 aa). A phosphoserine mark is found at serine 8 and serine 17. The chain crosses the membrane as a helical span at residues 106 to 126; it reads LQDVTLIILEIAAIVSLGLSF. Residues 127 to 154 lie on the Extracellular side of the membrane; sequence YQPPEGDNALCGEVSVGEEEGEGETGWI. Residues 155 to 175 traverse the membrane as a helical segment; the sequence is EGAAILLSVVCVVLVTAFNDW. Over 176–366 the chain is Cytoplasmic; sequence SKEKQFRGLQ…KEKSVLQGKL (191 aa). Residues 297-356 form a disordered region; sequence EEEKKDEKKKEKKNKKQDGAIENRNKAKAQDGAAMEMQPLKSEEGGDGDEKDKKKANLPK. 2 stretches are compositionally biased toward basic and acidic residues: residues 312 to 325 and 337 to 356; these read KQDG…KAKA and KSEE…NLPK. Serine 338 is modified (phosphoserine). The chain crosses the membrane as a helical span at residues 367–386; the sequence is TKLAVQIGKAGLLMSAITVI. Residues 387 to 418 are Extracellular-facing; it reads ILVLYFVIDTFWVQKRPWLAECTPIYIQYFVK. A helical membrane pass occupies residues 419-439; it reads FFIIGVTVLVVAVPEGLPLAV. Residues 440–855 are Cytoplasmic-facing; it reads TISLAYSVKK…RNVYDSISKF (416 aa). Residue aspartate 475 is the 4-aspartylphosphate intermediate of the active site. Mg(2+) contacts are provided by aspartate 475, threonine 477, and aspartate 797. Residues 856–876 form a helical membrane-spanning segment; the sequence is LQFQLTVNVVAVIVAFTGACI. The Extracellular portion of the chain corresponds to 877 to 882; sequence TQDSPL. A helical membrane pass occupies residues 883-903; sequence KAVQMLWVNLIMDTLASLALA. Topologically, residues 904-927 are cytoplasmic; that stretch reads TEPPTESLLLRKPYGRNKPLISRT. The helical transmembrane segment at 928 to 948 threads the bilayer; sequence MMKNILGHAFYQLVVVFTLLF. The Extracellular portion of the chain corresponds to 949–971; it reads AGEKFFDIDSGRNAPLHAPPSEH. Residues 972–991 form a helical membrane-spanning segment; that stretch reads YTIVFNTFVLMQLFNEINAR. At 992–1005 the chain is on the cytoplasmic side; sequence KIHGERNVFEGIFN. Residues 1006–1027 form a helical membrane-spanning segment; sequence NAIFCTIVLGTFVVQIIIVQFG. At 1028-1039 the chain is on the extracellular side; sequence GKPFSCSELSIE. Residues 1040–1060 form a helical membrane-spanning segment; it reads QWLWSIFLGMGTLLWGQLIST. The Cytoplasmic segment spans residues 1061–1220; it reads IPTSRLKFLK…SPLHSLETSL (160 aa). The calmodulin-binding subdomain A stretch occupies residues 1100–1117; it reads LRRGQILWFRGLNRIQTQ. Threonine 1116 is modified (phosphothreonine; by PKC). Positions 1118-1220 are required for basolateral membrane targeting; that stretch reads IRVVNAFRSS…SPLHSLETSL (103 aa). Residues serine 1140 and serine 1155 each carry the phosphoserine modification. Positions 1160–1220 are disordered; sequence PLIDDTDAED…SPLHSLETSL (61 aa). The residue at position 1165 (threonine 1165) is a Phosphothreonine. Serine 1178 is subject to Phosphoserine; by PKA. At serine 1182 the chain carries Phosphoserine. The segment covering 1200–1220 has biased composition (polar residues); sequence MNKSATSSSPGSPLHSLETSL.

Belongs to the cation transport ATPase (P-type) (TC 3.A.3) family. Type IIB subfamily. As to quaternary structure, monomer. Dimer. Oligomer. Calmodulin binding. Interacts with PDZD11. Interacts with SLC35G1 and STIM1; inhibits calcium-transporting ATPase activity after store depletion. Interacts with YWHAE; interacts with the monomeric and dimeric forms of the YWHAE but prefer the monomer form; this interaction inhibits calcium-transporting ATPase activity. Interacts with NPTN; this interaction stabilizes ATP2B1 and increases ATPase activity; this interaction controls T cell calcium homeostasis following T cell activation. Interacts with EPB41; regulates small intestinal calcium absorption through regulation of membrane expression of ATP2B1. Isoform B: Ubiquitously expressed. Isoform C: Found in brain cortex, skeletal muscle and heart muscle. Isoform D: Has only been found in fetal skeletal muscle. Isoform K: Found in small intestine and liver. Abundantly expressed in the endometrial epithelial cells and glandular epithelial cells in early-proliferative phase and early-secretory phases.

It localises to the cell membrane. Its subcellular location is the basolateral cell membrane. It is found in the synapse. The protein resides in the presynaptic cell membrane. The protein localises to the cytoplasmic vesicle. It localises to the secretory vesicle. Its subcellular location is the synaptic vesicle membrane. It catalyses the reaction Ca(2+)(in) + ATP + H2O = Ca(2+)(out) + ADP + phosphate + H(+). Functionally, catalyzes the hydrolysis of ATP coupled with the transport of calcium from the cytoplasm to the extracellular space thereby maintaining intracellular calcium homeostasis. Plays a role in blood pressure regulation through regulation of intracellular calcium concentration and nitric oxide production leading to regulation of vascular smooth muscle cells vasoconstriction. Positively regulates bone mineralization through absorption of calcium from the intestine. Plays dual roles in osteoclast differentiation and survival by regulating RANKL-induced calcium oscillations in preosteoclasts and mediating calcium extrusion in mature osteoclasts. Regulates insulin sensitivity through calcium/calmodulin signaling pathway by regulating AKT1 activation and NOS3 activation in endothelial cells. May play a role in synaptic transmission by modulating calcium and proton dynamics at the synaptic vesicles. The sequence is that of Plasma membrane calcium-transporting ATPase 1 from Homo sapiens (Human).